We begin with the raw amino-acid sequence, 124 residues long: Small ribosomal subunit protein uS13 (124 aa).

Residues 95–124 (GLPVRGQRTKTNARTRKGPKRTIAGKKKAR) are disordered.

The protein belongs to the universal ribosomal protein uS13 family. As to quaternary structure, part of the 30S ribosomal subunit. Forms a loose heterodimer with protein S19. Forms two bridges to the 50S subunit in the 70S ribosome.

Its function is as follows. Located at the top of the head of the 30S subunit, it contacts several helices of the 16S rRNA. In the 70S ribosome it contacts the 23S rRNA (bridge B1a) and protein L5 of the 50S subunit (bridge B1b), connecting the 2 subunits; these bridges are implicated in subunit movement. Contacts the tRNAs in the A and P-sites. The polypeptide is Small ribosomal subunit protein uS13 (Mycobacterium sp. (strain JLS)).